A 308-amino-acid polypeptide reads, in one-letter code: tRNA dimethylallyltransferase 1 (308 aa).

An ATP-binding site is contributed by 9-16; the sequence is GPTGVGKT. Substrate is bound at residue 11–16; that stretch reads TGVGKT. An interaction with substrate tRNA region spans residues 34–37; sequence DSRQ.

It belongs to the IPP transferase family. In terms of assembly, monomer. Mg(2+) is required as a cofactor.

It carries out the reaction adenosine(37) in tRNA + dimethylallyl diphosphate = N(6)-dimethylallyladenosine(37) in tRNA + diphosphate. Functionally, catalyzes the transfer of a dimethylallyl group onto the adenine at position 37 in tRNAs that read codons beginning with uridine, leading to the formation of N6-(dimethylallyl)adenosine (i(6)A). The polypeptide is tRNA dimethylallyltransferase 1 (Bacteroides thetaiotaomicron (strain ATCC 29148 / DSM 2079 / JCM 5827 / CCUG 10774 / NCTC 10582 / VPI-5482 / E50)).